The chain runs to 506 residues: GTPase Der (506 aa).

EngA-type G domains follow at residues 3–166 (PVVA…GEQL) and 218–391 (IKIA…ACAT). Residues 9–16 (GRPNVGKS), 56–60 (DTGGI), 118–121 (NKTD), 224–231 (GRPNVGKS), 271–275 (DTAGV), and 336–339 (NKWD) contribute to the GTP site. The region spanning 392–476 (QKNSTSMLTR…PIRIQFQEGN (85 aa)) is the KH-like domain.

This sequence belongs to the TRAFAC class TrmE-Era-EngA-EngB-Septin-like GTPase superfamily. EngA (Der) GTPase family. Associates with the 50S ribosomal subunit.

GTPase that plays an essential role in the late steps of ribosome biogenesis. The polypeptide is GTPase Der (Actinobacillus pleuropneumoniae serotype 7 (strain AP76)).